The following is a 465-amino-acid chain: Glycine--tRNA ligase (465 aa).

The substrate site is built by arginine 98 and glutamate 174. ATP contacts are provided by residues 206–208 (RNE), 216–221 (FRTREF), 290–291 (EL), and 334–337 (GADR). Residue 221–225 (FEQME) participates in substrate binding. 330–334 (EPSLG) provides a ligand contact to substrate.

Belongs to the class-II aminoacyl-tRNA synthetase family. Homodimer.

The protein localises to the cytoplasm. The enzyme catalyses tRNA(Gly) + glycine + ATP = glycyl-tRNA(Gly) + AMP + diphosphate. Functionally, catalyzes the attachment of glycine to tRNA(Gly). This Agathobacter rectalis (strain ATCC 33656 / DSM 3377 / JCM 17463 / KCTC 5835 / VPI 0990) (Eubacterium rectale) protein is Glycine--tRNA ligase.